Reading from the N-terminus, the 592-residue chain is MAVTSSSSSQPPAASQPGHFKRLWAYLRPELSSFILAMVAMGVVAATEGIIPKVVKDLLDQGFGGEYAGKLWRVPAMLVGIAVVRGVAQFGATYFLSLVSNKVLLNLRMKMFERLLQAPAAFYQRNTAASLINAVIFEVNQVLQVLTGVFITLVRDSMTVLALLIFLFYTNWRLTLVVAVILPVIGFLMSRINRRLRSLNREHQNLTNEAAYVVEEAAGGYKVVKLHGGEAYESRRFNAMTNRLRGYAMRMAVAGGLNQPVTQFLAALALSVILAIAMVQAQANQTTVGGFTGFVMAMLLLISPLKHLTDVNQPMQRGLTAAEFIFGLIDTPIEPQDGGKHIDRARGDLRFEHVTFRYGPDGRAALDSIDLHVKAGEIVALVGPSGSGKTTLVNLLPRFFEPTSGRIVLDGDALADLSLQDLRRQIAFVSQDVVLFNDTIAANVAYGARDASEIDMARVRRALEAAYLTDVVDNLPDGVDTNIGDNGSKLSGGQRQRLAIARAVYKDAPILILDEATSALDSESERQVQAALEALMQGRTTLVIAHRLSTIENADRIVVLEHGQIVEAGTHRELLDRDGLYAGLHRIQFATQ.

6 consecutive transmembrane segments (helical) span residues 31 to 51, 76 to 96, 134 to 154, 161 to 181, 261 to 281, and 288 to 308; these read LSSF…EGII, AMLV…TYFL, AVIF…ITLV, LALL…VAVI, VTQF…MVQA, and VGGF…LKHL. Residues 35–317 form the ABC transmembrane type-1 domain; the sequence is ILAMVAMGVV…LTDVNQPMQR (283 aa). The region spanning 349 to 587 is the ABC transporter domain; that stretch reads LRFEHVTFRY…DGLYAGLHRI (239 aa). An ATP-binding site is contributed by 383 to 390; that stretch reads GPSGSGKT.

The protein belongs to the ABC transporter superfamily. Lipid exporter (TC 3.A.1.106) family. Homodimer.

The protein localises to the cell inner membrane. It carries out the reaction ATP + H2O + lipid A-core oligosaccharideSide 1 = ADP + phosphate + lipid A-core oligosaccharideSide 2.. In terms of biological role, involved in lipopolysaccharide (LPS) biosynthesis. Translocates lipid A-core from the inner to the outer leaflet of the inner membrane. Transmembrane domains (TMD) form a pore in the inner membrane and the ATP-binding domain (NBD) is responsible for energy generation. The protein is ATP-dependent lipid A-core flippase of Ralstonia nicotianae (strain ATCC BAA-1114 / GMI1000) (Ralstonia solanacearum).